The chain runs to 332 residues: Oligopeptide transport ATP-binding protein OppF (332 aa).

Residues 23–264 (KNDKSLFFAK…TKHPYTKALM (242 aa)) form the ABC transporter domain. Residue 56–63 (GESGCGKS) coordinates ATP.

This sequence belongs to the ABC transporter superfamily. In terms of assembly, the complex is composed of two ATP-binding proteins (OppD and OppF), two transmembrane proteins (OppB and OppC) and a solute-binding protein (OppA).

Its subcellular location is the cell inner membrane. The catalysed reaction is a [peptide](out) + ATP + H2O = a [peptide](in) + ADP + phosphate + H(+). Functionally, part of the ABC transporter complex OppABCDF involved in the uptake of oligopeptides. Probably responsible for energy coupling to the transport system. This is Oligopeptide transport ATP-binding protein OppF (oppF) from Haemophilus influenzae (strain ATCC 51907 / DSM 11121 / KW20 / Rd).